Here is a 57-residue protein sequence, read N- to C-terminus: COP9 signalosome complex subunit 9 (57 aa).

The protein belongs to the CSN9 family. In terms of assembly, component of the CSN complex, probably composed of cops1, cops2, cops3, cops4, cops5, cops6, cops7, cops8 and cops9.

The protein resides in the nucleus. It localises to the cytoplasm. Its subcellular location is the nucleoplasm. Its function is as follows. Component of the COP9 signalosome complex (CSN), a complex involved in various cellular and developmental processes. The CSN complex is an essential regulator of the ubiquitin (Ubl) conjugation pathway by mediating the deneddylation of the cullin subunits of SCF-type E3 ligase complexes, leading to decrease the Ubl ligase activity. May play a role in cell proliferation. In Danio rerio (Zebrafish), this protein is COP9 signalosome complex subunit 9.